We begin with the raw amino-acid sequence, 708 residues long: ATP-dependent DNA helicase Hel308 (708 aa).

The short motif at 1-29 is the Q motif element; that stretch reads MSIDDLKLPSNVIDIIKNRGIKKLNPPQT. Residues glutamine 28 and 46-53 contribute to the ATP site; that span reads SPTGSGKT. The 164-residue stretch at 33–196 folds into the Helicase ATP-binding domain; that stretch reads KKGLLDGNRL…WLGAEPVATN (164 aa). A DEAH box motif is present at residues 145–148; sequence DELH. A Helicase C-terminal domain is found at 229–435; it reads HGDDAIIAYT…ERAFYTFLLG (207 aa).

Belongs to the helicase family. Hel308 subfamily. Monomer.

It catalyses the reaction Couples ATP hydrolysis with the unwinding of duplex DNA by translocating in the 3'-5' direction.. It carries out the reaction ATP + H2O = ADP + phosphate + H(+). In terms of biological role, DNA-dependent ATPase and 3'-5' DNA helicase that may be involved in repair of stalled replication forks. This Saccharolobus solfataricus (strain ATCC 35092 / DSM 1617 / JCM 11322 / P2) (Sulfolobus solfataricus) protein is ATP-dependent DNA helicase Hel308.